The following is a 777-amino-acid chain: 5-methyltetrahydropteroyltriglutamate--homocysteine methyltransferase (777 aa).

5-methyltetrahydropteroyltri-L-glutamate-binding positions include 17–20 and Lys-132; that span reads RELK. L-homocysteine is bound by residues 455–457 and Glu-508; that span reads IGS. L-methionine is bound by residues 455–457 and Glu-508; that span reads IGS. Residues 539 to 540 and Trp-585 each bind 5-methyltetrahydropteroyltri-L-glutamate; that span reads RC. An L-homocysteine-binding site is contributed by Asp-623. L-methionine is bound at residue Asp-623. Glu-629 contacts 5-methyltetrahydropteroyltri-L-glutamate. 3 residues coordinate Zn(2+): His-665, Cys-667, and Glu-689. The Proton donor role is filled by His-718. Cys-750 is a binding site for Zn(2+).

This sequence belongs to the vitamin-B12 independent methionine synthase family. Zn(2+) serves as cofactor.

The enzyme catalyses 5-methyltetrahydropteroyltri-L-glutamate + L-homocysteine = tetrahydropteroyltri-L-glutamate + L-methionine. It participates in amino-acid biosynthesis; L-methionine biosynthesis via de novo pathway; L-methionine from L-homocysteine (MetE route): step 1/1. Its function is as follows. Catalyzes the transfer of a methyl group from 5-methyltetrahydrofolate to homocysteine resulting in methionine formation. The sequence is that of 5-methyltetrahydropteroyltriglutamate--homocysteine methyltransferase from Caulobacter vibrioides (strain ATCC 19089 / CIP 103742 / CB 15) (Caulobacter crescentus).